The chain runs to 70 residues: DNA-directed RNA polymerase subunit epsilon (70 aa).

The protein belongs to the RNA polymerase subunit epsilon family. In terms of assembly, RNAP is composed of a core of 2 alpha, a beta and a beta' subunit. The core is associated with a delta subunit, and at least one of epsilon or omega. When a sigma factor is associated with the core the holoenzyme is formed, which can initiate transcription.

The catalysed reaction is RNA(n) + a ribonucleoside 5'-triphosphate = RNA(n+1) + diphosphate. A non-essential component of RNA polymerase (RNAP). The protein is DNA-directed RNA polymerase subunit epsilon of Lacticaseibacillus casei (strain BL23) (Lactobacillus casei).